A 411-amino-acid polypeptide reads, in one-letter code: Probable G-protein coupled receptor AH9.1 (411 aa).

Over Met1–Leu18 the chain is Cytoplasmic. A helical transmembrane segment spans residues Phe19–Phe39. Topologically, residues Phe40–Asp55 are extracellular. A helical transmembrane segment spans residues Tyr56–Leu76. The Cytoplasmic segment spans residues Asn77 to Ser87. A helical membrane pass occupies residues Ile88–Pro108. Residues Phe109–Leu131 lie on the Extracellular side of the membrane. The chain crosses the membrane as a helical span at residues Glu132–Val152. Topologically, residues Asp153 to Arg176 are cytoplasmic. The chain crosses the membrane as a helical span at residues Thr177–Phe197. Topologically, residues Gln198–Lys229 are extracellular. Asn210 carries N-linked (GlcNAc...) asparagine glycosylation. The chain crosses the membrane as a helical span at residues Phe230–Leu250. Topologically, residues Asn251–Leu299 are cytoplasmic. A helical transmembrane segment spans residues Phe300–Val320. Residues Arg321–Arg333 lie on the Extracellular side of the membrane. The helical transmembrane segment at Ala334 to Cys354 threads the bilayer. At Ser355–Val411 the chain is on the cytoplasmic side.

The protein belongs to the G-protein coupled receptor 1 family.

It localises to the cell membrane. In terms of biological role, not known. Putative receptor. This is Probable G-protein coupled receptor AH9.1 from Caenorhabditis elegans.